Reading from the N-terminus, the 358-residue chain is MQITRLNIERVRNLKAVALSGLQPFNIFYGANGSGKTSILEAVHLLATGRSFRTHMPKHYIQQNAQDAIIFAQSLSEKIGMQKLLSGEQLIKVNGDTVATQGQLAKLLPLQHLDPQSTDIIDHGAKPRRQLLDWLMFHVEPEFYFAWQYYSRALKQRNMLLKTKRQLSLAELEPWNKMLSEYGEMLHSQRLVTVERWKDFFQQDLAQLLPDLQIELEYSPGFHSEVGLWQDLLNYHNKDVERRYTEYGPHRADLRLKTALGDADDVLSRGQKKLLMMALKLSQIAMLHASNKETVVLLDDLTAELDSNAQRRLIERLSQLGSQVFITTLDHQAVTQHLDGLSISYQLYNVDHGQVHAV.

30–37 (GANGSGKT) provides a ligand contact to ATP.

The protein belongs to the RecF family.

It is found in the cytoplasm. Its function is as follows. The RecF protein is involved in DNA metabolism; it is required for DNA replication and normal SOS inducibility. RecF binds preferentially to single-stranded, linear DNA. It also seems to bind ATP. In Acinetobacter baylyi (strain ATCC 33305 / BD413 / ADP1), this protein is DNA replication and repair protein RecF.